Here is a 364-residue protein sequence, read N- to C-terminus: Dihydroorotate dehydrogenase (quinone) (364 aa).

FMN contacts are provided by residues 61 to 65 and Thr85; that span reads AGFDK. Substrate is bound at residue Lys65. Position 110–114 (110–114) interacts with substrate; that stretch reads NRMGF. FMN is bound by residues Asn139 and Asn170. Residue Asn170 participates in substrate binding. Ser173 serves as the catalytic Nucleophile. A substrate-binding site is contributed by Asn175. Residues Lys214 and Ala242 each coordinate FMN. 243-244 contacts substrate; the sequence is NT. FMN is bound by residues Gly266, Gly295, and 316-317; that span reads YS.

This sequence belongs to the dihydroorotate dehydrogenase family. Type 2 subfamily. Monomer. FMN is required as a cofactor.

The protein resides in the cell membrane. It carries out the reaction (S)-dihydroorotate + a quinone = orotate + a quinol. It functions in the pathway pyrimidine metabolism; UMP biosynthesis via de novo pathway; orotate from (S)-dihydroorotate (quinone route): step 1/1. Catalyzes the conversion of dihydroorotate to orotate with quinone as electron acceptor. The protein is Dihydroorotate dehydrogenase (quinone) of Rhodopseudomonas palustris (strain BisB5).